We begin with the raw amino-acid sequence, 199 residues long: Transgelin-2 (199 aa).

At A2 the chain carries N-acetylalanine. S11 bears the Phosphoserine mark. Residues K17 and K20 each carry the N6-acetyllysine modification. Residues 24-136 enclose the Calponin-homology (CH) domain; sequence ADLEQILIQW…RTLMNLGGLA (113 aa). Phosphoserine is present on S163. K171 is covalently cross-linked (Glycyl lysine isopeptide (Lys-Gly) (interchain with G-Cter in SUMO2)). A Calponin-like repeat occupies 174–199; it reads IGLQMGTNRGASQAGMTGYGMPRQIL. T180 is subject to Phosphothreonine. R182 and R196 each carry omega-N-methylarginine.

Belongs to the calponin family.

In Mus musculus (Mouse), this protein is Transgelin-2 (Tagln2).